A 1226-amino-acid chain; its full sequence is Receptor-type tyrosine-protein phosphatase O (1226 aa).

An N-terminal signal peptide occupies residues 1 to 29; it reads MGHLPRGTLGGRRLLPLLGLFVLLKIVTT. A Fibronectin type-III 1 domain is found at 30-115; that stretch reads FHVAVQDDNN…TKPSRSITVL (86 aa). The Extracellular segment spans residues 30-832; that stretch reads FHVAVQDDNN…VTEVNPNVVV (803 aa). Residues Asn75, Asn154, and Asn227 are each glycosylated (N-linked (GlcNAc...) asparagine). The disordered stretch occupies residues 242–305; the sequence is EPSGSFPEDS…PNSTDYESTS (64 aa). Over residues 260 to 270 the composition is skewed to basic and acidic residues; it reads IGRDRRFHFPE. Over residues 277 to 291 the composition is skewed to low complexity; that stretch reads PSNVSSGSPPSNVSS. A glycan (N-linked (GlcNAc...) asparagine) is linked at Asn279. The span at 296 to 305 shows a compositional bias: polar residues; sequence PNSTDYESTS. 5 consecutive Fibronectin type-III domains span residues 339–435, 445–541, 542–638, 641–734, and 735–827; these read RTEK…ISPT, KPQH…IVPT, GIKD…TISF, APVA…LEPA, and PPKS…TEVN. 2 N-linked (GlcNAc...) asparagine glycosylation sites follow: Asn471 and Asn500. N-linked (GlcNAc...) asparagine glycans are attached at residues Asn710, Asn743, and Asn800. A helical membrane pass occupies residues 833–853; the sequence is ISVLAILSTLLIGLLLVTLVI. Topologically, residues 854-1226 are cytoplasmic; that stretch reads LRKKHLQMAR…DVIYENVSKS (373 aa). A Phosphoserine modification is found at Ser875. The Tyrosine-protein phosphatase domain maps to 948-1205; sequence FSLQFEELKL…IFIHQCVQLM (258 aa). Substrate-binding positions include Asp1112, 1146–1152, and Gln1190; that span reads CSAGVGR. The Phosphocysteine intermediate role is filled by Cys1146. Position 1220 is a phosphotyrosine (Tyr1220).

Belongs to the protein-tyrosine phosphatase family. Receptor class 3 subfamily. As to quaternary structure, interacts (phosphorylated form) with FYN and GRB2.

The protein localises to the membrane. It catalyses the reaction O-phospho-L-tyrosyl-[protein] + H2O = L-tyrosyl-[protein] + phosphate. Its function is as follows. Possesses tyrosine phosphatase activity. Plays a role in regulating the glomerular pressure/filtration rate relationship through an effect on podocyte structure and function. The sequence is that of Receptor-type tyrosine-protein phosphatase O (Ptpro) from Mus musculus (Mouse).